Reading from the N-terminus, the 1059-residue chain is Carbamoyl phosphate synthase large chain (1059 aa).

The segment at methionine 1–glutamate 401 is carboxyphosphate synthetic domain. ATP is bound by residues arginine 129, arginine 169, glycine 175, glycine 176, arginine 208, isoleucine 210, glutamate 215, glycine 241, isoleucine 242, histidine 243, glutamine 284, and glutamate 298. The region spanning lysine 133–valine 327 is the ATP-grasp 1 domain. 3 residues coordinate Mg(2+): glutamine 284, glutamate 298, and asparagine 300. Residues glutamine 284, glutamate 298, and asparagine 300 each coordinate Mn(2+). Residues valine 402–serine 546 are oligomerization domain. Positions valine 547–tyrosine 929 are carbamoyl phosphate synthetic domain. The 191-residue stretch at glutamate 671–leucine 861 folds into the ATP-grasp 2 domain. Residues arginine 707, serine 746, isoleucine 748, glutamate 752, glycine 777, valine 778, histidine 779, serine 780, glutamine 820, and glutamate 832 each coordinate ATP. The Mg(2+) site is built by glutamine 820, glutamate 832, and asparagine 834. Glutamine 820, glutamate 832, and asparagine 834 together coordinate Mn(2+). Positions leucine 930–isoleucine 1059 constitute an MGS-like domain. The allosteric domain stretch occupies residues leucine 930–isoleucine 1059.

Belongs to the CarB family. As to quaternary structure, composed of two chains; the small (or glutamine) chain promotes the hydrolysis of glutamine to ammonia, which is used by the large (or ammonia) chain to synthesize carbamoyl phosphate. Tetramer of heterodimers (alpha,beta)4. It depends on Mg(2+) as a cofactor. Requires Mn(2+) as cofactor.

It catalyses the reaction hydrogencarbonate + L-glutamine + 2 ATP + H2O = carbamoyl phosphate + L-glutamate + 2 ADP + phosphate + 2 H(+). It carries out the reaction hydrogencarbonate + NH4(+) + 2 ATP = carbamoyl phosphate + 2 ADP + phosphate + 2 H(+). It participates in amino-acid biosynthesis; L-arginine biosynthesis; carbamoyl phosphate from bicarbonate: step 1/1. It functions in the pathway pyrimidine metabolism; UMP biosynthesis via de novo pathway; (S)-dihydroorotate from bicarbonate: step 1/3. Its function is as follows. Large subunit of the glutamine-dependent carbamoyl phosphate synthetase (CPSase). CPSase catalyzes the formation of carbamoyl phosphate from the ammonia moiety of glutamine, carbonate, and phosphate donated by ATP, constituting the first step of 2 biosynthetic pathways, one leading to arginine and/or urea and the other to pyrimidine nucleotides. The large subunit (synthetase) binds the substrates ammonia (free or transferred from glutamine from the small subunit), hydrogencarbonate and ATP and carries out an ATP-coupled ligase reaction, activating hydrogencarbonate by forming carboxy phosphate which reacts with ammonia to form carbamoyl phosphate. In Streptococcus sanguinis (strain SK36), this protein is Carbamoyl phosphate synthase large chain.